Reading from the N-terminus, the 840-residue chain is E3 ubiquitin-protein ligase RNF19A (840 aa).

The disordered stretch occupies residues 40–61; sequence SDRDLQSSTSSVSLPSVKKAPK. Residues 45 to 56 show a composition bias toward low complexity; it reads QSSTSSVSLPSV. Residues 128 to 351 form a TRIAD supradomain region; that stretch reads DFIECPLCLL…LSPSGCTFWG (224 aa). 18 residues coordinate Zn(2+): cysteine 132, cysteine 135, cysteine 150, histidine 152, cysteine 155, cysteine 158, cysteine 176, cysteine 179, cysteine 219, cysteine 224, cysteine 241, cysteine 246, cysteine 251, cysteine 254, histidine 259, cysteine 264, cysteine 301, and cysteine 304. The segment at 132-179 adopts an RING-type 1 zinc-finger fold; sequence CPLCLLRHSKDRFPDIMTCHHRSCVDCLRQYLRIEISESRVNISCPEC. The IBR-type zinc-finger motif lies at 199–264; the sequence is EKYEEFMLRR…KQIWHPNQTC (66 aa). The RING-type 2; atypical zinc-finger motif lies at 301–332; it reads CPRCAAYIIKMNDGSCNHMTCAVCGCEFCWLC. The active site involves cysteine 316. Zn(2+) is bound by residues cysteine 321, cysteine 324, cysteine 329, cysteine 332, histidine 340, and cysteine 347. A run of 2 helical transmembrane segments spans residues 368 to 388 and 424 to 444; these read LVGA…AMII and VIVS…IMLA. 3 disordered regions span residues 625 to 685, 700 to 721, and 786 to 808; these read FKFR…GNMK, QQST…PSVA, and CSDV…GGKP. Position 631 is a phosphoserine (serine 631). An interaction with CASR region spans residues 660 to 840; the sequence is ATKWSKEATG…DLKVAVQTEI (181 aa). Residues 671 to 683 show a composition bias toward basic residues; it reads KKSKSGKLRKKGN. The span at 700–717 shows a compositional bias: polar residues; sequence QQSTNSSEFEAPSLSDSM.

Belongs to the RBR family. RNF19 subfamily. In terms of assembly, interacts with UBE2L3 and UBE2L6. Also interacts with transcription factor Sp1. Interacts with SNCAIP and CASR. Interacts with VCP.

Its subcellular location is the membrane. The protein localises to the cytoplasm. The protein resides in the cytoskeleton. It localises to the microtubule organizing center. It is found in the centrosome. It carries out the reaction [E2 ubiquitin-conjugating enzyme]-S-ubiquitinyl-L-cysteine + [acceptor protein]-L-lysine = [E2 ubiquitin-conjugating enzyme]-L-cysteine + [acceptor protein]-N(6)-ubiquitinyl-L-lysine.. It functions in the pathway protein modification; protein ubiquitination. Functionally, E3 ubiquitin-protein ligase which accepts ubiquitin from E2 ubiquitin-conjugating enzymes UBE2L3 and UBE2L6 in the form of a thioester and then directly transfers the ubiquitin to targeted substrates, such as SNCAIP or CASR. The sequence is that of E3 ubiquitin-protein ligase RNF19A (Rnf19a) from Mus musculus (Mouse).